The chain runs to 446 residues: Adenylosuccinate synthetase (446 aa).

Residues 20–26 (GDEGKGK) and 48–50 (GHT) each bind GTP. The active-site Proton acceptor is the Asp-21. Mg(2+) is bound by residues Asp-21 and Gly-48. IMP contacts are provided by residues 21–24 (DEGK), 46–49 (NAGH), Thr-137, Arg-151, Gln-232, Thr-247, and Arg-319. Residue His-49 is the Proton donor of the active site. Position 315–321 (315–321 (SVTGRPR)) interacts with substrate. Residues Arg-321, 347–349 (KLD), and 429–431 (STG) contribute to the GTP site.

The protein belongs to the adenylosuccinate synthetase family. In terms of assembly, homodimer. The cofactor is Mg(2+).

It localises to the cytoplasm. The catalysed reaction is IMP + L-aspartate + GTP = N(6)-(1,2-dicarboxyethyl)-AMP + GDP + phosphate + 2 H(+). The protein operates within purine metabolism; AMP biosynthesis via de novo pathway; AMP from IMP: step 1/2. Plays an important role in the de novo pathway of purine nucleotide biosynthesis. Catalyzes the first committed step in the biosynthesis of AMP from IMP. The protein is Adenylosuccinate synthetase of Polynucleobacter necessarius subsp. necessarius (strain STIR1).